The following is a 440-amino-acid chain: UDP-N-acetylmuramoylalanine--D-glutamate ligase (440 aa).

115 to 121 (GSNGKST) contributes to the ATP binding site.

Belongs to the MurCDEF family.

It is found in the cytoplasm. The enzyme catalyses UDP-N-acetyl-alpha-D-muramoyl-L-alanine + D-glutamate + ATP = UDP-N-acetyl-alpha-D-muramoyl-L-alanyl-D-glutamate + ADP + phosphate + H(+). The protein operates within cell wall biogenesis; peptidoglycan biosynthesis. In terms of biological role, cell wall formation. Catalyzes the addition of glutamate to the nucleotide precursor UDP-N-acetylmuramoyl-L-alanine (UMA). This is UDP-N-acetylmuramoylalanine--D-glutamate ligase from Aliivibrio fischeri (strain MJ11) (Vibrio fischeri).